The chain runs to 486 residues: Protein nucleotidyltransferase YdiU (486 aa).

Gly-90, Gly-92, Arg-93, Lys-113, Asp-125, Gly-126, Arg-176, and Arg-183 together coordinate ATP. Asp-252 (proton acceptor) is an active-site residue. 2 residues coordinate Mg(2+): Asn-253 and Asp-262. Asp-262 contacts ATP.

The protein belongs to the SELO family. The cofactor is Mg(2+). It depends on Mn(2+) as a cofactor.

It catalyses the reaction L-seryl-[protein] + ATP = 3-O-(5'-adenylyl)-L-seryl-[protein] + diphosphate. The enzyme catalyses L-threonyl-[protein] + ATP = 3-O-(5'-adenylyl)-L-threonyl-[protein] + diphosphate. It carries out the reaction L-tyrosyl-[protein] + ATP = O-(5'-adenylyl)-L-tyrosyl-[protein] + diphosphate. The catalysed reaction is L-histidyl-[protein] + UTP = N(tele)-(5'-uridylyl)-L-histidyl-[protein] + diphosphate. It catalyses the reaction L-seryl-[protein] + UTP = O-(5'-uridylyl)-L-seryl-[protein] + diphosphate. The enzyme catalyses L-tyrosyl-[protein] + UTP = O-(5'-uridylyl)-L-tyrosyl-[protein] + diphosphate. Its function is as follows. Nucleotidyltransferase involved in the post-translational modification of proteins. It can catalyze the addition of adenosine monophosphate (AMP) or uridine monophosphate (UMP) to a protein, resulting in modifications known as AMPylation and UMPylation. This is Protein nucleotidyltransferase YdiU from Pseudomonas putida (strain ATCC 700007 / DSM 6899 / JCM 31910 / BCRC 17059 / LMG 24140 / F1).